The following is a 470-amino-acid chain: Sorting nexin-17 (470 aa).

The PX domain maps to 1-109 (MHFSIPETES…SFLRRAQQET (109 aa)). A 1,2-diacyl-sn-glycero-3-phospho-(1D-myo-inositol-3-phosphate)-binding residues include Arg-36, Ser-38, Lys-62, and Arg-75. One can recognise a Ras-associating domain in the interval 115–206 (EEVSLEVLLS…YKIVLRKSYW (92 aa)). The FERM-like stretch occupies residues 115-432 (EEVSLEVLLS…DASRESMVKL (318 aa)). The segment at 270–432 (GYLRFDACVA…DASRESMVKL (163 aa)) is PTB-like F3 module. Residues Ser-336, Ser-407, Ser-409, Ser-415, Ser-421, Ser-437, and Ser-440 each carry the phosphoserine modification. Positions 400–426 (VGGTLRRSDSQQAVKSPPLLESPDASR) are disordered.

It belongs to the sorting nexin family. In terms of assembly, monomer. Interacts with APP (via cytoplasmic YXNPXY motif). Interacts with KIF1B. Interacts with the C-termini of P-selectin, PTC, LDLR, VLDLR, LRP1 and LRP8. Interacts with KRIT1 (via N-terminus). Interacts with HRAS. Interacts with ITGB1 and ITGB5 (via NPxY motif). Interacts with CCDC22 and CCDC93; the interaction associates SNX17 with the CCC complex. Interacts (via C-terminus) with VPS26C and VPS35L; the interactions are direct and associate SNX17 with the retriever complex.

The protein localises to the cytoplasm. It is found in the early endosome. The protein resides in the cytoplasmic vesicle membrane. In terms of biological role, critical regulator of endosomal recycling of numerous surface proteins, including integrins, signaling receptor and channels. Binds to NPxY sequences in the cytoplasmic tails of target cargos. Associates with retriever and CCC complexes to prevent lysosomal degradation and promote cell surface recycling of numerous cargos such as integrins ITGB1, ITGB5 and their associated alpha subunits. Also required for maintenance of normal cell surface levels of APP and LRP1. Interacts with membranes containing phosphatidylinositol 3-phosphate (PtdIns(3P)). The sequence is that of Sorting nexin-17 (SNX17) from Bos taurus (Bovine).